We begin with the raw amino-acid sequence, 149 residues long: MRFLTVAFLFLALSASALAEPVKFKDCGSWVGVIKEVNVSPCPTQPCKLHRGQSYSVNVTFTSNTQSQSSKAVVHGIVMGIPVPFPIPESDGCKSGIRCPIEKDKTYNYVNKLPVKNEYPSIKVVVEWELTDDKNQRFFCWQIPIEVEA.

The N-terminal stretch at 1–19 is a signal peptide; sequence MRFLTVAFLFLALSASALA. 3 disulfides stabilise this stretch: Cys-27/Cys-140, Cys-42/Cys-47, and Cys-93/Cys-99. Asn-58 is a glycosylation site (N-linked (GlcNAc...) asparagine). Lys-116 carries the post-translational modification N6-acetyllysine.

This sequence belongs to the NPC2 family. In terms of assembly, interacts with NPC1 (via the second lumenal domain) in a cholestrol-dependent manner. Interacts with NUS1/NgBR, the interaction stabilizes NCP2 and regulates cholesterol trafficking. Interacts with DHDDS. Interacts with NEDD4L (via C2 domain). Interacts with NPC1L1. In terms of tissue distribution, expressed in kidney, spleen, liver and mammary gland, but not in testis.

It is found in the secreted. The protein localises to the endoplasmic reticulum. Its subcellular location is the lysosome. The enzyme catalyses cholesterol(in) = cholesterol(out). Intracellular cholesterol transporter which acts in concert with NPC1 and plays an important role in the egress of cholesterol from the lysosomal compartment. Unesterified cholesterol that has been released from LDLs in the lumen of the late endosomes/lysosomes is transferred by NPC2 to the cholesterol-binding pocket in the N-terminal domain of NPC1. May bind and mobilize cholesterol that is associated with membranes. NPC2 binds cholesterol with a 1:1 stoichiometry. Can bind a variety of sterols, including lathosterol, desmosterol and the plant sterols stigmasterol and beta-sitosterol. The secreted form of NCP2 regulates biliary cholesterol secretion via stimulation of ABCG5/ABCG8-mediated cholesterol transport. This is NPC intracellular cholesterol transporter 2 from Bos taurus (Bovine).